Consider the following 93-residue polypeptide: Alpha-defensin 10 (93 aa).

Positions Met-1–Ala-19 are cleaved as a signal peptide. A propeptide spanning residues Asp-20–Ser-58 is cleaved from the precursor. Positions Ile-22 to Glu-56 are disordered. 3 disulfide bridges follow: Cys-64/Cys-92, Cys-66/Cys-81, and Cys-71/Cys-91.

Belongs to the alpha-defensin family. Paneth cells of the small bowel.

The protein resides in the secreted. In terms of biological role, probably contributes to the antimicrobial barrier function of the small bowel mucosa. This Mus musculus (Mouse) protein is Alpha-defensin 10 (Defa10).